Consider the following 310-residue polypeptide: ADP-L-glycero-D-manno-heptose-6-epimerase (310 aa).

Residues 10–11 (FI), 31–32 (DN), Lys-38, Lys-53, 75–79 (EGACS), and Asn-92 each bind NADP(+). Catalysis depends on Tyr-140, which acts as the Proton acceptor. Lys-144 provides a ligand contact to NADP(+). Residue Asn-169 participates in substrate binding. The NADP(+) site is built by Val-170 and Lys-178. Lys-178 acts as the Proton acceptor in catalysis. Residues Ser-180, His-187, 201 to 204 (FEGS), Arg-209, and Tyr-272 contribute to the substrate site.

This sequence belongs to the NAD(P)-dependent epimerase/dehydratase family. HldD subfamily. In terms of assembly, homopentamer. The cofactor is NADP(+).

It carries out the reaction ADP-D-glycero-beta-D-manno-heptose = ADP-L-glycero-beta-D-manno-heptose. The protein operates within nucleotide-sugar biosynthesis; ADP-L-glycero-beta-D-manno-heptose biosynthesis; ADP-L-glycero-beta-D-manno-heptose from D-glycero-beta-D-manno-heptose 7-phosphate: step 4/4. Functionally, catalyzes the interconversion between ADP-D-glycero-beta-D-manno-heptose and ADP-L-glycero-beta-D-manno-heptose via an epimerization at carbon 6 of the heptose. This Citrobacter koseri (strain ATCC BAA-895 / CDC 4225-83 / SGSC4696) protein is ADP-L-glycero-D-manno-heptose-6-epimerase.